Consider the following 257-residue polypeptide: Imidazole glycerol phosphate synthase subunit HisF (257 aa).

Active-site residues include Asp-11 and Asp-130.

This sequence belongs to the HisA/HisF family. As to quaternary structure, heterodimer of HisH and HisF.

Its subcellular location is the cytoplasm. It catalyses the reaction 5-[(5-phospho-1-deoxy-D-ribulos-1-ylimino)methylamino]-1-(5-phospho-beta-D-ribosyl)imidazole-4-carboxamide + L-glutamine = D-erythro-1-(imidazol-4-yl)glycerol 3-phosphate + 5-amino-1-(5-phospho-beta-D-ribosyl)imidazole-4-carboxamide + L-glutamate + H(+). It participates in amino-acid biosynthesis; L-histidine biosynthesis; L-histidine from 5-phospho-alpha-D-ribose 1-diphosphate: step 5/9. Its function is as follows. IGPS catalyzes the conversion of PRFAR and glutamine to IGP, AICAR and glutamate. The HisF subunit catalyzes the cyclization activity that produces IGP and AICAR from PRFAR using the ammonia provided by the HisH subunit. This chain is Imidazole glycerol phosphate synthase subunit HisF, found in Shewanella sediminis (strain HAW-EB3).